Consider the following 873-residue polypeptide: Alanine--tRNA ligase (873 aa).

H562, H566, C663, and H667 together coordinate Zn(2+).

It belongs to the class-II aminoacyl-tRNA synthetase family. Zn(2+) serves as cofactor.

It is found in the cytoplasm. It catalyses the reaction tRNA(Ala) + L-alanine + ATP = L-alanyl-tRNA(Ala) + AMP + diphosphate. In terms of biological role, catalyzes the attachment of alanine to tRNA(Ala) in a two-step reaction: alanine is first activated by ATP to form Ala-AMP and then transferred to the acceptor end of tRNA(Ala). Also edits incorrectly charged Ser-tRNA(Ala) and Gly-tRNA(Ala) via its editing domain. The chain is Alanine--tRNA ligase from Bordetella avium (strain 197N).